The sequence spans 507 residues: Protein DETOXIFICATION 39 (507 aa).

The next 12 helical transmembrane spans lie at 58–78 (VLFR…GMGI), 92–112 (LAAA…MLGM), 141–161 (IVLA…YPIL), 178–198 (IAGL…QKFL), 209–229 (FISA…VYVM), 233–253 (FMGI…SQCF), 287–307 (AVMI…AGLL), 318–338 (SICM…NAAV), 359–379 (WTAT…VIWF), 403–423 (FLAI…VAVG), 433–453 (VNVG…GFTF), and 459–479 (GIWT…LYVT).

Belongs to the multi antimicrobial extrusion (MATE) (TC 2.A.66.1) family.

The protein localises to the membrane. This Arabidopsis thaliana (Mouse-ear cress) protein is Protein DETOXIFICATION 39.